The chain runs to 225 residues: Phosphoribosylformylglycinamidine synthase subunit PurQ (225 aa).

One can recognise a Glutamine amidotransferase type-1 domain in the interval 5 to 225 (RFGIVVFPGS…WQSIVQSLAG (221 aa)). The Nucleophile role is filled by C89. Catalysis depends on residues H198 and E200.

Part of the FGAM synthase complex composed of 1 PurL, 1 PurQ and 2 PurS subunits.

The protein localises to the cytoplasm. The enzyme catalyses N(2)-formyl-N(1)-(5-phospho-beta-D-ribosyl)glycinamide + L-glutamine + ATP + H2O = 2-formamido-N(1)-(5-O-phospho-beta-D-ribosyl)acetamidine + L-glutamate + ADP + phosphate + H(+). It carries out the reaction L-glutamine + H2O = L-glutamate + NH4(+). It functions in the pathway purine metabolism; IMP biosynthesis via de novo pathway; 5-amino-1-(5-phospho-D-ribosyl)imidazole from N(2)-formyl-N(1)-(5-phospho-D-ribosyl)glycinamide: step 1/2. Its function is as follows. Part of the phosphoribosylformylglycinamidine synthase complex involved in the purines biosynthetic pathway. Catalyzes the ATP-dependent conversion of formylglycinamide ribonucleotide (FGAR) and glutamine to yield formylglycinamidine ribonucleotide (FGAM) and glutamate. The FGAM synthase complex is composed of three subunits. PurQ produces an ammonia molecule by converting glutamine to glutamate. PurL transfers the ammonia molecule to FGAR to form FGAM in an ATP-dependent manner. PurS interacts with PurQ and PurL and is thought to assist in the transfer of the ammonia molecule from PurQ to PurL. This is Phosphoribosylformylglycinamidine synthase subunit PurQ from Synechococcus sp. (strain JA-3-3Ab) (Cyanobacteria bacterium Yellowstone A-Prime).